Consider the following 85-residue polypeptide: Large ribosomal subunit protein bL27 (85 aa).

The disordered stretch occupies residues 1–22; that stretch reads MAHKKAGGSTNNGRDSESKRLG.

The protein belongs to the bacterial ribosomal protein bL27 family.

This chain is Large ribosomal subunit protein bL27, found in Photobacterium profundum (strain SS9).